A 61-amino-acid chain; its full sequence is Tryptophyllin-1 (61 aa).

Residues 1–22 form the signal peptide; the sequence is MDILKKSLFLALFLGLVSISFC. Positions 23 to 53 are excised as a propeptide; that stretch reads DEEKRQDDDESNESEEKKEIHEEGSQEERRE. Residues 24–61 are disordered; it reads EEKRQDDDESNESEEKKEIHEEGSQEERREKPPPWVPV. The segment covering 36–55 has biased composition (basic and acidic residues); sequence SEEKKEIHEEGSQEERREKP.

Expressed by the skin glands.

Its subcellular location is the secreted. Functionally, the synthetic peptide inhibits bradykinin-induced relaxation of rat tail artery smooth muscle, and also has anti-proliferative effects on the human prostate cancer cell lines LNCaP, PC3 and DU145. This Phyllomedusa sauvagei (Sauvage's leaf frog) protein is Tryptophyllin-1.